A 246-amino-acid polypeptide reads, in one-letter code: UDP-2,3-diacylglucosamine hydrolase (246 aa).

Mn(2+)-binding residues include Asp8, His10, Asp41, Asn79, and His114. Substrate is bound at residue Asn79–Arg80. Substrate is bound by residues Asp122, Lys164, Lys167, and His195. Mn(2+) contacts are provided by His195 and His197.

It belongs to the LpxH family. Mn(2+) is required as a cofactor.

The protein localises to the cell inner membrane. The enzyme catalyses UDP-2-N,3-O-bis[(3R)-3-hydroxytetradecanoyl]-alpha-D-glucosamine + H2O = 2-N,3-O-bis[(3R)-3-hydroxytetradecanoyl]-alpha-D-glucosaminyl 1-phosphate + UMP + 2 H(+). Its pathway is glycolipid biosynthesis; lipid IV(A) biosynthesis; lipid IV(A) from (3R)-3-hydroxytetradecanoyl-[acyl-carrier-protein] and UDP-N-acetyl-alpha-D-glucosamine: step 4/6. Its function is as follows. Hydrolyzes the pyrophosphate bond of UDP-2,3-diacylglucosamine to yield 2,3-diacylglucosamine 1-phosphate (lipid X) and UMP by catalyzing the attack of water at the alpha-P atom. Involved in the biosynthesis of lipid A, a phosphorylated glycolipid that anchors the lipopolysaccharide to the outer membrane of the cell. This is UDP-2,3-diacylglucosamine hydrolase from Vibrio cholerae serotype O1 (strain ATCC 39541 / Classical Ogawa 395 / O395).